A 522-amino-acid polypeptide reads, in one-letter code: Echinocystic acid 23-monooxygenase (522 aa).

Residues 4-24 (LPYIATSIACIVILRWALNMM) form a helical; Signal-anchor for type II membrane protein membrane-spanning segment. An N-linked (GlcNAc...) asparagine glycan is attached at Asn-190. Cys-470 provides a ligand contact to heme.

Belongs to the cytochrome P450 family. Heme serves as cofactor. As to expression, mainly expressed in flowers and flower buds, to a lesser extent in young leaves and, at low levels, in old leaves, stems and roots.

The protein resides in the membrane. It participates in secondary metabolite biosynthesis; terpenoid biosynthesis. Functionally, component of the oleanane-type triterpene saponins (e.g. saponarioside A and saponarioside B) biosynthetic pathway, leading to the production of natural products with detergent properties used as traditional sources of soap. An oxidoreductase that facilitates the oxidation of the methyl group to a carboxyl group at the C-23 position of echinocystic acid, resulting in the formation of quillaic acid (QA). The protein is Echinocystic acid 23-monooxygenase of Saponaria officinalis (Common soapwort).